A 272-amino-acid polypeptide reads, in one-letter code: HMP-PP phosphatase (272 aa).

Catalysis depends on aspartate 8, which acts as the Nucleophile. Residues aspartate 8, aspartate 10, and aspartate 212 each coordinate Mg(2+).

It belongs to the HAD-like hydrolase superfamily. Cof family. Mg(2+) serves as cofactor.

It carries out the reaction 4-amino-2-methyl-5-(diphosphooxymethyl)pyrimidine + H2O = 4-amino-2-methyl-5-(phosphooxymethyl)pyrimidine + phosphate + H(+). In terms of biological role, catalyzes the hydrolysis of 4-amino-2-methyl-5-hydroxymethylpyrimidine pyrophosphate (HMP-PP) to 4-amino-2-methyl-5-hydroxymethylpyrimidine phosphate (HMP-P). The sequence is that of HMP-PP phosphatase from Salmonella schwarzengrund (strain CVM19633).